The sequence spans 328 residues: Acetaldehyde dehydrogenase 3 (328 aa).

Residue 17–20 (SGNI) participates in NAD(+) binding. Catalysis depends on C135, which acts as the Acyl-thioester intermediate. NAD(+)-binding positions include 166 to 174 (SAGPGTRAN) and N298.

The protein belongs to the acetaldehyde dehydrogenase family.

It carries out the reaction acetaldehyde + NAD(+) + CoA = acetyl-CoA + NADH + H(+). The polypeptide is Acetaldehyde dehydrogenase 3 (Nocardia farcinica (strain IFM 10152)).